The chain runs to 275 residues: Subtilisin (275 aa).

Glutamine 2 lines the Ca(2+) pocket. One can recognise a Peptidase S8 domain in the interval proline 5–alanine 274. Residue aspartate 32 is the Charge relay system of the active site. Residue aspartate 41 participates in Ca(2+) binding. Residue histidine 64 is the Charge relay system of the active site. Residues leucine 75, asparagine 77, isoleucine 79, valine 81, alanine 169, tyrosine 171, and threonine 174 each contribute to the Ca(2+) site. Serine 221 (charge relay system) is an active-site residue.

The protein belongs to the peptidase S8 family. It depends on Ca(2+) as a cofactor.

Its subcellular location is the secreted. It carries out the reaction Hydrolysis of proteins with broad specificity for peptide bonds, and a preference for a large uncharged residue in P1. Hydrolyzes peptide amides.. Functionally, subtilisin is an extracellular alkaline serine protease, it catalyzes the hydrolysis of proteins and peptide amides. The protein is Subtilisin (apr) of Bacillus pumilus (Bacillus mesentericus).